The following is a 240-amino-acid chain: 1-(5-phosphoribosyl)-5-[(5-phosphoribosylamino)methylideneamino] imidazole-4-carboxamide isomerase (240 aa).

D8 serves as the catalytic Proton acceptor. The active-site Proton donor is the D130.

The protein belongs to the HisA/HisF family.

It localises to the cytoplasm. The enzyme catalyses 1-(5-phospho-beta-D-ribosyl)-5-[(5-phospho-beta-D-ribosylamino)methylideneamino]imidazole-4-carboxamide = 5-[(5-phospho-1-deoxy-D-ribulos-1-ylimino)methylamino]-1-(5-phospho-beta-D-ribosyl)imidazole-4-carboxamide. Its pathway is amino-acid biosynthesis; L-histidine biosynthesis; L-histidine from 5-phospho-alpha-D-ribose 1-diphosphate: step 4/9. The sequence is that of 1-(5-phosphoribosyl)-5-[(5-phosphoribosylamino)methylideneamino] imidazole-4-carboxamide isomerase from Elusimicrobium minutum (strain Pei191).